A 125-amino-acid chain; its full sequence is Large ribosomal subunit protein bL12 (125 aa).

It belongs to the bacterial ribosomal protein bL12 family. Homodimer. Part of the ribosomal stalk of the 50S ribosomal subunit. Forms a multimeric L10(L12)X complex, where L10 forms an elongated spine to which 2 to 4 L12 dimers bind in a sequential fashion. Binds GTP-bound translation factors.

Forms part of the ribosomal stalk which helps the ribosome interact with GTP-bound translation factors. Is thus essential for accurate translation. The polypeptide is Large ribosomal subunit protein bL12 (Endomicrobium trichonymphae).